The following is a 179-amino-acid chain: Ribosome maturation factor RimM (179 aa).

The 77-residue stretch at 100 to 176 (HGEYHLTELI…FILLTPPSGL (77 aa)) folds into the PRC barrel domain.

The protein belongs to the RimM family. Binds ribosomal protein uS19.

It is found in the cytoplasm. Its function is as follows. An accessory protein needed during the final step in the assembly of 30S ribosomal subunit, possibly for assembly of the head region. Essential for efficient processing of 16S rRNA. May be needed both before and after RbfA during the maturation of 16S rRNA. It has affinity for free ribosomal 30S subunits but not for 70S ribosomes. The chain is Ribosome maturation factor RimM from Prochlorococcus marinus subsp. pastoris (strain CCMP1986 / NIES-2087 / MED4).